A 54-amino-acid chain; its full sequence is Metallothionein-2 (54 aa).

The protein belongs to the metallothionein superfamily. Type 11 family.

This is Metallothionein-2 (MTP2) from Yarrowia lipolytica (strain CLIB 122 / E 150) (Yeast).